The chain runs to 474 residues: tRNA-2-methylthio-N(6)-dimethylallyladenosine synthase (474 aa).

Positions 3-120 (QKLHIKTWGC…LPEMINQIRG (118 aa)) constitute an MTTase N-terminal domain. 6 residues coordinate [4Fe-4S] cluster: C12, C49, C83, C157, C161, and C164. Residues 143 to 375 (RAEGPTAFVS…QQRINNQAAQ (233 aa)) enclose the Radical SAM core domain. A TRAM domain is found at 378 to 441 (RAMLGTEQRV…TNSLRGEVVR (64 aa)).

Belongs to the methylthiotransferase family. MiaB subfamily. Monomer. [4Fe-4S] cluster serves as cofactor.

Its subcellular location is the cytoplasm. The catalysed reaction is N(6)-dimethylallyladenosine(37) in tRNA + (sulfur carrier)-SH + AH2 + 2 S-adenosyl-L-methionine = 2-methylsulfanyl-N(6)-dimethylallyladenosine(37) in tRNA + (sulfur carrier)-H + 5'-deoxyadenosine + L-methionine + A + S-adenosyl-L-homocysteine + 2 H(+). Catalyzes the methylthiolation of N6-(dimethylallyl)adenosine (i(6)A), leading to the formation of 2-methylthio-N6-(dimethylallyl)adenosine (ms(2)i(6)A) at position 37 in tRNAs that read codons beginning with uridine. The chain is tRNA-2-methylthio-N(6)-dimethylallyladenosine synthase from Pasteurella multocida (strain Pm70).